The primary structure comprises 517 residues: Amidophosphoribosyltransferase (517 aa).

N-acetylmethionine is present on Met-1. The propeptide occupies 1 to 11 (MELEELGIREE). Cys-12 acts as the Nucleophile in catalysis. The region spanning 12 to 261 (CGVFGCIASG…PGEIVEISRH (250 aa)) is the Glutamine amidotransferase type-2 domain. Position 280 (Cys-280) interacts with [4Fe-4S] cluster. Residues Ser-327, Asp-389, and Asp-390 each contribute to the Mg(2+) site. Residues Cys-426, Cys-503, and Cys-506 each contribute to the [4Fe-4S] cluster site.

In the C-terminal section; belongs to the purine/pyrimidine phosphoribosyltransferase family. Homotetramer. Mg(2+) is required as a cofactor. Requires [4Fe-4S] cluster as cofactor. In terms of tissue distribution, ubiquitously expressed.

It carries out the reaction 5-phospho-beta-D-ribosylamine + L-glutamate + diphosphate = 5-phospho-alpha-D-ribose 1-diphosphate + L-glutamine + H2O. The protein operates within purine metabolism; IMP biosynthesis via de novo pathway; N(1)-(5-phospho-D-ribosyl)glycinamide from 5-phospho-alpha-D-ribose 1-diphosphate: step 1/2. Functionally, catalyzes the formation of phosphoribosylamine from phosphoribosylpyrophosphate (PRPP) and glutamine. The sequence is that of Amidophosphoribosyltransferase (PPAT) from Homo sapiens (Human).